Consider the following 199-residue polypeptide: MAKKSTRTTPEDSQASTTDSAATSTASEATQAATSATDDQAEQTTAVDPTQQITDLKAQLDAKDDQLLRAQAEIVNMQNRNKKEQAALLKYDGQALAKDVLPVLDNLERALATPADDEAAQQLKKGVEMVYGHLQDALKKHGVTEVAAAGEKFDPNIHQAVQTVPVDDDHPADTVVQVLQRGYLLKDRTLRPAMVVVAQ.

A disordered region spans residues 1–50; the sequence is MAKKSTRTTPEDSQASTTDSAATSTASEATQAATSATDDQAEQTTAVDPT. A compositionally biased stretch (low complexity) spans 11 to 46; sequence EDSQASTTDSAATSTASEATQAATSATDDQAEQTTA.

Belongs to the GrpE family. In terms of assembly, homodimer.

The protein resides in the cytoplasm. Its function is as follows. Participates actively in the response to hyperosmotic and heat shock by preventing the aggregation of stress-denatured proteins, in association with DnaK and GrpE. It is the nucleotide exchange factor for DnaK and may function as a thermosensor. Unfolded proteins bind initially to DnaJ; upon interaction with the DnaJ-bound protein, DnaK hydrolyzes its bound ATP, resulting in the formation of a stable complex. GrpE releases ADP from DnaK; ATP binding to DnaK triggers the release of the substrate protein, thus completing the reaction cycle. Several rounds of ATP-dependent interactions between DnaJ, DnaK and GrpE are required for fully efficient folding. The sequence is that of Protein GrpE from Lactiplantibacillus plantarum (strain ATCC BAA-793 / NCIMB 8826 / WCFS1) (Lactobacillus plantarum).